A 515-amino-acid polypeptide reads, in one-letter code: WUSCHEL-related homeobox 12 (515 aa).

2 stretches are compositionally biased toward polar residues: residues 23-32 and 44-57; these read QQQPDMNGNG and TAAT…SLLS. 3 disordered regions span residues 23–76, 130–156, and 176–195; these read QQQP…WNPR, NKLR…PPST, and LLAA…GSSK. Residues 62–71 are compositionally biased toward basic and acidic residues; the sequence is EGTRNPEPKP. Residues 68 to 132 constitute a DNA-binding region (homeobox; WUS-type); the sequence is EPKPRWNPRP…NRKSRTKNKL (65 aa). Basic residues predominate over residues 130–143; that stretch reads NKLRAAGHHHHHGR. 2 stretches are compositionally biased toward low complexity: residues 144–156 and 177–195; these read AAAL…PPST and LAAT…GSSK.

The protein belongs to the WUS homeobox family.

The protein localises to the nucleus. Its function is as follows. Transcription factor which may be involved in developmental processes. The polypeptide is WUSCHEL-related homeobox 12 (WOX12) (Oryza sativa subsp. japonica (Rice)).